The primary structure comprises 517 residues: FERM domain-containing protein 5 (517 aa).

Positions 17–298 (YSCTVRLLDD…ENQAFYKLEK (282 aa)) constitute an FERM domain. An interaction with ROCK1 region spans residues 308–353 (SNLFFKGSRFRYSGRVAKEVMESSAKIKREPPEIHRAGMVPSRSCP). The segment at 344 to 367 (AGMVPSRSCPSITHGPRLSSVPRT) is disordered. Ser375 carries the phosphoserine modification. Disordered regions lie at residues 385-408 (DSAH…VRSS) and 485-517 (GHGG…VPLD). The segment covering 388–398 (HSTPVRSSSHG) has biased composition (polar residues). The span at 498 to 517 (KGPQLQQQQWKGWGKSVPLD) shows a compositional bias: low complexity.

As to quaternary structure, interacts with CTNND1, ITGB5 (via cytoplasmic domain) and ROCK1.

It is found in the cell junction. The protein resides in the adherens junction. Functionally, may be involved in regulation of cell migration. May regulate cell-matrix interactions via its interaction with ITGB5 and modifying ITGB5 cytoplasmic tail interactions such as with FERMT2 and TLN1. May regulate ROCK1 kinase activity possibly involved in regulation of actin stress fiber formation. The chain is FERM domain-containing protein 5 (Frmd5) from Mus musculus (Mouse).